The sequence spans 149 residues: Low molecular weight protein-tyrosine-phosphatase Wzb (149 aa).

Cys9 (nucleophile) is an active-site residue. Arg15 is a catalytic residue. Catalysis depends on Asp115, which acts as the Proton donor.

This sequence belongs to the low molecular weight phosphotyrosine protein phosphatase family.

The enzyme catalyses O-phospho-L-tyrosyl-[protein] + H2O = L-tyrosyl-[protein] + phosphate. It participates in glycan metabolism; exopolysaccharide biosynthesis. In terms of biological role, dephosphorylates Wzc. Required for the extracellular polysaccharide colanic acid synthesis. Probably involved in the export of colanic acid from the cell to medium. Involved in protection of cells against contact-dependent growth inhibition (CDI). The chain is Low molecular weight protein-tyrosine-phosphatase Wzb (wzb) from Salmonella typhimurium (strain LT2 / SGSC1412 / ATCC 700720).